The primary structure comprises 460 residues: UDP-N-acetylmuramate--L-alanine ligase (460 aa).

116-122 is a binding site for ATP; it reads GSHGKTT.

Belongs to the MurCDEF family.

Its subcellular location is the cytoplasm. It carries out the reaction UDP-N-acetyl-alpha-D-muramate + L-alanine + ATP = UDP-N-acetyl-alpha-D-muramoyl-L-alanine + ADP + phosphate + H(+). It functions in the pathway cell wall biogenesis; peptidoglycan biosynthesis. Functionally, cell wall formation. The sequence is that of UDP-N-acetylmuramate--L-alanine ligase from Caldanaerobacter subterraneus subsp. tengcongensis (strain DSM 15242 / JCM 11007 / NBRC 100824 / MB4) (Thermoanaerobacter tengcongensis).